The primary structure comprises 359 residues: 3-dehydroquinate synthase (359 aa).

NAD(+) is bound by residues 69–74 (DGEKYK), 103–107 (GVVGD), 127–128 (TT), Lys140, Lys149, and 167–170 (TLDT). Glu182, His245, and His262 together coordinate Zn(2+).

The protein belongs to the sugar phosphate cyclases superfamily. Dehydroquinate synthase family. The cofactor is Co(2+). Zn(2+) serves as cofactor. It depends on NAD(+) as a cofactor.

The protein localises to the cytoplasm. It carries out the reaction 7-phospho-2-dehydro-3-deoxy-D-arabino-heptonate = 3-dehydroquinate + phosphate. The protein operates within metabolic intermediate biosynthesis; chorismate biosynthesis; chorismate from D-erythrose 4-phosphate and phosphoenolpyruvate: step 2/7. Functionally, catalyzes the conversion of 3-deoxy-D-arabino-heptulosonate 7-phosphate (DAHP) to dehydroquinate (DHQ). This Ruthia magnifica subsp. Calyptogena magnifica protein is 3-dehydroquinate synthase.